Reading from the N-terminus, the 290-residue chain is Nucleotide-binding protein Sde_3181 (290 aa).

Residue Gly8 to Thr15 participates in ATP binding. A GTP-binding site is contributed by Asp60–Asn63.

The protein belongs to the RapZ-like family.

Its function is as follows. Displays ATPase and GTPase activities. The sequence is that of Nucleotide-binding protein Sde_3181 from Saccharophagus degradans (strain 2-40 / ATCC 43961 / DSM 17024).